The sequence spans 537 residues: Zinc finger protein 703 (537 aa).

Disordered regions lie at residues 1-38, 90-254, and 300-323; these read MNCSPPGSSTDTERQSSSSGTPVAPRPTLAPTHPLRQA, SQIG…VAPV, and VGNQLPGTLGLPGKPPSSSPLTGA. A compositionally biased stretch (polar residues) spans 101-111; the sequence is SKLNSVTSSGL. A compositionally biased stretch (low complexity) spans 149–158; it reads GSSSGGAADK. The span at 176–185 shows a compositional bias: polar residues; that stretch reads SPSSRVSSPG. Positions 188–203 are enriched in basic and acidic residues; that stretch reads CDSKNNESQEKKEPEA. Polar residues predominate over residues 205 to 220; that stretch reads KANSETSQVNPTLTRA. Positions 221 to 232 are enriched in low complexity; that stretch reads STSNSSAESSQS. The segment at 409-437 adopts a C2H2-type zinc-finger fold; sequence HICNWVSASGPCDKRFSTSEELLAHLRTH.

It belongs to the Elbow/Noc family.

It is found in the nucleus. The protein resides in the cytoplasm. Functionally, transcriptional corepressor which does not bind directly to DNA and may regulate transcription through recruitment of histone deacetylases to gene promoters. Regulates cell adhesion, migration and proliferation. Involved in specification of the lateral neural plate border (NPB). May be required for segmental gene expression during hindbrain development. In Xenopus tropicalis (Western clawed frog), this protein is Zinc finger protein 703 (znf703).